The sequence spans 125 residues: Large ribosomal subunit protein bL20 (125 aa).

The protein belongs to the bacterial ribosomal protein bL20 family.

Functionally, binds directly to 23S ribosomal RNA and is necessary for the in vitro assembly process of the 50S ribosomal subunit. It is not involved in the protein synthesizing functions of that subunit. The chain is Large ribosomal subunit protein bL20 from Rhizorhabdus wittichii (strain DSM 6014 / CCUG 31198 / JCM 15750 / NBRC 105917 / EY 4224 / RW1) (Sphingomonas wittichii).